A 132-amino-acid polypeptide reads, in one-letter code: Small ribosomal subunit protein uS8 (132 aa).

This sequence belongs to the universal ribosomal protein uS8 family. In terms of assembly, part of the 30S ribosomal subunit. Contacts proteins S5 and S12.

Functionally, one of the primary rRNA binding proteins, it binds directly to 16S rRNA central domain where it helps coordinate assembly of the platform of the 30S subunit. This is Small ribosomal subunit protein uS8 from Bacillus velezensis (strain DSM 23117 / BGSC 10A6 / LMG 26770 / FZB42) (Bacillus amyloliquefaciens subsp. plantarum).